Reading from the N-terminus, the 355-residue chain is 3-dehydroquinate synthase (355 aa).

NAD(+) contacts are provided by residues 106–110, 130–131, Lys-143, and Lys-152; these read GVVGD and TS. Zn(2+) contacts are provided by Glu-185, His-246, and His-262.

The protein belongs to the sugar phosphate cyclases superfamily. Dehydroquinate synthase family. The cofactor is Co(2+). Zn(2+) serves as cofactor. Requires NAD(+) as cofactor.

Its subcellular location is the cytoplasm. It carries out the reaction 7-phospho-2-dehydro-3-deoxy-D-arabino-heptonate = 3-dehydroquinate + phosphate. It participates in metabolic intermediate biosynthesis; chorismate biosynthesis; chorismate from D-erythrose 4-phosphate and phosphoenolpyruvate: step 2/7. Its function is as follows. Catalyzes the conversion of 3-deoxy-D-arabino-heptulosonate 7-phosphate (DAHP) to dehydroquinate (DHQ). This chain is 3-dehydroquinate synthase, found in Latilactobacillus sakei subsp. sakei (strain 23K) (Lactobacillus sakei subsp. sakei).